The chain runs to 210 residues: Prolactin (210 aa).

The signal sequence occupies residues Met1 to Ala23. 2 cysteine pairs are disulfide-bonded: Cys69/Cys183 and Cys200/Cys210.

Belongs to the somatotropin/prolactin family. In terms of tissue distribution, pituitary gland.

The protein resides in the secreted. The sequence is that of Prolactin (prl) from Coregonus autumnalis (Arctic cisco).